We begin with the raw amino-acid sequence, 461 residues long: D-phenylhydantoinase (461 aa).

Residues histidine 59, histidine 61, and lysine 151 each coordinate a divalent metal cation. Residue lysine 151 is modified to N6-carboxylysine. A substrate-binding site is contributed by tyrosine 156. A divalent metal cation contacts are provided by histidine 182 and histidine 239. Serine 286 is a substrate binding site. A divalent metal cation is bound at residue aspartate 313. Asparagine 335 contributes to the substrate binding site.

This sequence belongs to the metallo-dependent hydrolases superfamily. Hydantoinase/dihydropyrimidinase family. Homotetramer. A divalent metal cation serves as cofactor. Carboxylation allows a single lysine to coordinate two divalent metal cations.

The catalysed reaction is D-5-phenylhydantoin + H2O = N-carbamoyl-D-phenylglycine + H(+). In terms of biological role, catalyzes the stereospecific hydrolysis of the cyclic amide bond of D-hydantoin derivatives with an aromatic side chains at the 5'-position. Has no activity on dihydropyrimidines. The physiological function is unknown. In Escherichia coli (strain 55989 / EAEC), this protein is D-phenylhydantoinase.